The chain runs to 901 residues: Phosphatidylinositol 3-kinase catalytic subunit type 3 (901 aa).

The C2 PI3K-type domain occupies 21–189 (LQTNVQVKVA…DLLFKQVTRQ (169 aa)). The region spanning 302–527 (RHRQVKPNKQ…SKMYQNIQDR (226 aa)) is the PIK helical domain. The region spanning 607–886 (IPDTASFFKS…QIESSLNAKM (280 aa)) is the PI3K/PI4K catalytic domain. The segment at 613 to 619 (FFKSEMM) is G-loop. The tract at residues 755–763 (GLGDRHLDN) is catalytic loop. The tract at residues 774 to 795 (HVDFGFILGRDPKPMPPPMKLT) is activation loop.

Belongs to the PI3/PI4-kinase family. As to quaternary structure, interacts with bec-1. May interact with dyn-1. Mn(2+) is required as a cofactor. As to expression, ubiquitous.

The protein localises to the nucleus outer membrane. Its subcellular location is the cytoplasm. It is found in the cytoplasmic granule. The protein resides in the cell projection. It localises to the phagocytic cup. It catalyses the reaction a 1,2-diacyl-sn-glycero-3-phospho-(1D-myo-inositol) + ATP = a 1,2-diacyl-sn-glycero-3-phospho-(1D-myo-inositol-3-phosphate) + ADP + H(+). Inhibited by wortmannin. In terms of biological role, catalytic subunit of the PI3K complex that mediates formation of phosphatidylinositol 3-phosphate. Together with bec-1, mediates the production of phosphatidylinositol 3-phosphate on intracellular vesicles and thereby regulates membrane trafficking. Plays a role in endosome-to-Golgi retrograde transport of mig-14. Involved in clearance of apoptotic cell corpses by phagosomes. Phagosome maturation requires two sequential and non-overlapping pulses of phosphatidylinositol-3-phosphate (PI3P) on the vesicle surface which mediates recruitment of sortins snx-1 and lst-4 and small GTPases rab-5, rab-2 and rab-7, downstream of dynamin dyn-1. The first pulse is initiated by piki-1, then maintained by vps-34 which also produces the second pulse. Required for embryonic development. Together with bec-1, involved in L3/L4 larval molting stage probably by regulating cuticle shedding. Regulates the expansion of the nucleus outer membrane. Involved in the secretion and localization of lrp-1 at the apical surface of hyp7 syncytium. May regulate endocytosis in hypodermal cells. May play a role in the formation of gut granules (a lysosome-related organelle). Plays a role in germ stem cell proliferation during larval development. This chain is Phosphatidylinositol 3-kinase catalytic subunit type 3, found in Caenorhabditis elegans.